Consider the following 325-residue polypeptide: MNSSFHLHFLDLGLNATEGNLSGLSVRNASSPCEDMGIAVEVFLALGLISLLENILVIGAIVRNRNLHIPMYFFVGSLAVADMLVSLSNFWETITIYLLTNKHLVMADASVRHLDNVFDSMICISVVASMCSLLAIAVDRYVTIFCRLRYQRIMTGRRSGAIIAGIWAFCTSCGTVFIVYYESTYVVVCLIAMFLTMLLLMASLYTHMFLLARTHVRRIAALPGHSSVRQRTGVKGAITLAMLLGVFIICWAPFFLHLILMISCPQNLYCSCFMSHFNMYLILIMCNSVIDPLIYAFRSQEMRKTFKEIVCFQGFRTPCRFPSTY.

The Extracellular portion of the chain corresponds to 1–37; the sequence is MNSSFHLHFLDLGLNATEGNLSGLSVRNASSPCEDMG. N-linked (GlcNAc...) asparagine glycosylation is found at asparagine 2, asparagine 15, asparagine 20, and asparagine 28. A helical transmembrane segment spans residues 38 to 61; the sequence is IAVEVFLALGLISLLENILVIGAI. Residues 62 to 73 lie on the Cytoplasmic side of the membrane; that stretch reads VRNRNLHIPMYF. Residues 74-97 traverse the membrane as a helical segment; it reads FVGSLAVADMLVSLSNFWETITIY. At 98–114 the chain is on the extracellular side; the sequence is LLTNKHLVMADASVRHL. Residues 115-138 form a helical membrane-spanning segment; that stretch reads DNVFDSMICISVVASMCSLLAIAV. Topologically, residues 139–155 are cytoplasmic; sequence DRYVTIFCRLRYQRIMT. A helical transmembrane segment spans residues 156 to 179; the sequence is GRRSGAIIAGIWAFCTSCGTVFIV. The Extracellular segment spans residues 180–186; it reads YYESTYV. A helical transmembrane segment spans residues 187–211; the sequence is VVCLIAMFLTMLLLMASLYTHMFLL. Over 212 to 239 the chain is Cytoplasmic; it reads ARTHVRRIAALPGHSSVRQRTGVKGAIT. The helical transmembrane segment at 240-265 threads the bilayer; that stretch reads LAMLLGVFIICWAPFFLHLILMISCP. Topologically, residues 266–273 are extracellular; the sequence is QNLYCSCF. Residues 274–297 traverse the membrane as a helical segment; that stretch reads MSHFNMYLILIMCNSVIDPLIYAF. Over 298-325 the chain is Cytoplasmic; that stretch reads RSQEMRKTFKEIVCFQGFRTPCRFPSTY. Residue cysteine 311 is the site of S-palmitoyl cysteine attachment.

The protein belongs to the G-protein coupled receptor 1 family.

The protein localises to the cell membrane. Functionally, receptor for MSH (alpha, beta and gamma) and ACTH. The activity of this receptor is mediated by G proteins which activate adenylate cyclase. This receptor is a possible mediator of the immunomodulation properties of melanocortins. This is Melanocortin receptor 5 (MC5R) from Ovis aries (Sheep).